The primary structure comprises 130 residues: Small ribosomal subunit protein uS8 (130 aa).

Belongs to the universal ribosomal protein uS8 family. Part of the 30S ribosomal subunit. Contacts proteins S5 and S12.

Functionally, one of the primary rRNA binding proteins, it binds directly to 16S rRNA central domain where it helps coordinate assembly of the platform of the 30S subunit. The chain is Small ribosomal subunit protein uS8 from Shewanella piezotolerans (strain WP3 / JCM 13877).